We begin with the raw amino-acid sequence, 174 residues long: Inactive protein RESTRICTED TEV MOVEMENT 1 (174 aa).

Residues 1–152 (MKIGPVGKHD…LQYIGVYLRP (152 aa)) form the Jacalin-type lectin domain.

It belongs to the jacalin lectin family. As to quaternary structure, self-interacts. Interacts with RTM3.

Its subcellular location is the cytoplasm. Its function is as follows. Unable to mediate restriction of long-distance movement of the pathogenic tobacco etch virus (TEV) without causing a hypersensitive response or inducing systemic acquired resistance. This chain is Inactive protein RESTRICTED TEV MOVEMENT 1 (RTM1), found in Arabidopsis thaliana (Mouse-ear cress).